Here is a 383-residue protein sequence, read N- to C-terminus: Succinyl-diaminopimelate desuccinylase (383 aa).

Zn(2+) is bound at residue H74. D76 is a catalytic residue. D107 is a binding site for Zn(2+). The active-site Proton acceptor is the E141. 3 residues coordinate Zn(2+): E142, E170, and H356.

This sequence belongs to the peptidase M20A family. DapE subfamily. As to quaternary structure, homodimer. Zn(2+) serves as cofactor. The cofactor is Co(2+).

The catalysed reaction is N-succinyl-(2S,6S)-2,6-diaminopimelate + H2O = (2S,6S)-2,6-diaminopimelate + succinate. Its pathway is amino-acid biosynthesis; L-lysine biosynthesis via DAP pathway; LL-2,6-diaminopimelate from (S)-tetrahydrodipicolinate (succinylase route): step 3/3. In terms of biological role, catalyzes the hydrolysis of N-succinyl-L,L-diaminopimelic acid (SDAP), forming succinate and LL-2,6-diaminopimelate (DAP), an intermediate involved in the bacterial biosynthesis of lysine and meso-diaminopimelic acid, an essential component of bacterial cell walls. The chain is Succinyl-diaminopimelate desuccinylase from Polynucleobacter necessarius subsp. necessarius (strain STIR1).